We begin with the raw amino-acid sequence, 679 residues long: Palmitoyltransferase ERF2 (679 aa).

Disordered stretches follow at residues 1 to 181 (MASK…SQMR), 194 to 250 (RQMS…MSSD), and 267 to 338 (LSNL…SQKS). The Cytoplasmic segment spans residues 1–368 (MASKPDDDGF…WQNTRGRPIN (368 aa)). 2 stretches are compositionally biased toward polar residues: residues 44–57 (VQNN…STDM) and 66–82 (TGAS…SLRN). 2 stretches are compositionally biased toward low complexity: residues 103 to 114 (STSQPPSLSSRS) and 143 to 167 (PSTM…PTSP). Polar residues predominate over residues 291-301 (NDGQLSQNRST). A helical membrane pass occupies residues 369–389 (IATGIFVVVPCALFFGFEAPW). The Lumenal segment spans residues 390-393 (LWNN). Residues 394–414 (VSPAIPIVFAYLAYICFSSFI) form a helical membrane-spanning segment. Over 415 to 511 (HASVTDPGIL…NNCVGKRNYR (97 aa)) the chain is Cytoplasmic. The 51-residue stretch at 468-518 (KHCRTCNIWRPPRAHHCRLCDNCIETHDHHCVWLNNCVGKRNYRYFFTFVT) folds into the DHHC domain. Cys-498 functions as the S-palmitoyl cysteine intermediate in the catalytic mechanism. The chain crosses the membrane as a helical span at residues 512–532 (YFFTFVTSATVLAAYLIATSL). Residues 533–554 (TQILLYRNRQGISFGQAVDHFR) are Lumenal-facing. Residues 555-575 (VPFALVFLGFITFLYPAALMG) traverse the membrane as a helical segment. Residues 576–679 (YHIFLMARGE…PVSLRNDTPH (104 aa)) lie on the Cytoplasmic side of the membrane. Residues 640 to 679 (LGIRRDKRPRSSSQGLEMHDVNPGSSGFQGPVSLRNDTPH) form a disordered region.

The protein belongs to the DHHC palmitoyltransferase family. ERF2/ZDHHC9 subfamily. Post-translationally, autopalmitoylated.

It localises to the endoplasmic reticulum membrane. The enzyme catalyses L-cysteinyl-[protein] + hexadecanoyl-CoA = S-hexadecanoyl-L-cysteinyl-[protein] + CoA. Functionally, palmitoyltransferase specific for Ras proteins. In Gibberella zeae (strain ATCC MYA-4620 / CBS 123657 / FGSC 9075 / NRRL 31084 / PH-1) (Wheat head blight fungus), this protein is Palmitoyltransferase ERF2 (ERF2).